The chain runs to 452 residues: Phosphoglucosamine mutase (452 aa).

Ser-108 acts as the Phosphoserine intermediate in catalysis. Positions 108, 247, 249, and 251 each coordinate Mg(2+). Ser-108 carries the post-translational modification Phosphoserine.

This sequence belongs to the phosphohexose mutase family. Requires Mg(2+) as cofactor. In terms of processing, activated by phosphorylation.

It catalyses the reaction alpha-D-glucosamine 1-phosphate = D-glucosamine 6-phosphate. Catalyzes the conversion of glucosamine-6-phosphate to glucosamine-1-phosphate. This Burkholderia pseudomallei (strain K96243) protein is Phosphoglucosamine mutase.